The following is a 679-amino-acid chain: MSEPRQILVTSALPYANGSIHLGHMLEYIQTDMWVRFQKLRGNQCVYVCADDAHGSAIMLRAEKEGITPEQLIANVQAEHSSDFADFLVDFDNFHSTHSEENRELSGLIYTRLRDAGHIATRSVTQYFDPEKGMFLADRFIKGTCPKCAAEDQYGDNCEKCGATYAPTELKNPKSAISGATPVLRDSQHFFFKLPDFQAMLQQWTRSGTLQDAVANKLAEWLDSGLQEWDISRDAPYFGFEIPGEPGKYFYVWLDAPIGYMASFKNLCARRPELDFDAFWSEGSKAELYHFIGKDIVNFHALFWPAMLEGSGFRKPTAVNVHGYLTVNGAKMSKSRGTFIKARTYLDHLQPEYLRYYYAAKLGRGVDDLDLNLEDFVQKVNSDLVGKVVNIASRCAGFIHKGNDGVMVAGDAAPDLTEAFLAAAPSIAEAYESRDFGRAMREIMALADRANAWIADKAPWSLAKQEGKQEEVQAICAQGINLFRQLVIFLKPVLPLLAADAEAFLNVAPLTWNDHLSRLENHKLNPFKALMSRIEPAKVEAMIAASKEDLLAAEAKAPAGNGELTKDPLSAEIEFDTFAAVDLRVALIVKAEAVPGADKLLQLTLDIGDERRNVFSGIKSAYPDPSKLEGRLTMMVANLKPRKMRFGVSEGMVMAAGPGGEEIYLLSPDSGAKPGQRIK.

A 'HIGH' region motif is present at residues 14-24 (PYANGSIHLGH). Zn(2+) is bound by residues cysteine 145, cysteine 148, cysteine 158, and cysteine 161. The short motif at 331–335 (KMSKS) is the 'KMSKS' region element. Lysine 334 contributes to the ATP binding site. A tRNA-binding domain is found at 577-679 (TFAAVDLRVA…SGAKPGQRIK (103 aa)).

Belongs to the class-I aminoacyl-tRNA synthetase family. MetG type 1 subfamily. Homodimer. Requires Zn(2+) as cofactor.

It is found in the cytoplasm. It catalyses the reaction tRNA(Met) + L-methionine + ATP = L-methionyl-tRNA(Met) + AMP + diphosphate. Is required not only for elongation of protein synthesis but also for the initiation of all mRNA translation through initiator tRNA(fMet) aminoacylation. This is Methionine--tRNA ligase from Pseudomonas entomophila (strain L48).